We begin with the raw amino-acid sequence, 214 residues long: ATP-dependent Clp protease proteolytic subunit (214 aa).

The active-site Nucleophile is S114. H139 is a catalytic residue.

Belongs to the peptidase S14 family. As to quaternary structure, fourteen ClpP subunits assemble into 2 heptameric rings which stack back to back to give a disk-like structure with a central cavity, resembling the structure of eukaryotic proteasomes.

Its subcellular location is the cytoplasm. The catalysed reaction is Hydrolysis of proteins to small peptides in the presence of ATP and magnesium. alpha-casein is the usual test substrate. In the absence of ATP, only oligopeptides shorter than five residues are hydrolyzed (such as succinyl-Leu-Tyr-|-NHMec, and Leu-Tyr-Leu-|-Tyr-Trp, in which cleavage of the -Tyr-|-Leu- and -Tyr-|-Trp bonds also occurs).. Its function is as follows. Cleaves peptides in various proteins in a process that requires ATP hydrolysis. Has a chymotrypsin-like activity. Plays a major role in the degradation of misfolded proteins. The chain is ATP-dependent Clp protease proteolytic subunit from Nitrosomonas europaea (strain ATCC 19718 / CIP 103999 / KCTC 2705 / NBRC 14298).